We begin with the raw amino-acid sequence, 218 residues long: Peptidyl-tRNA hydrolase (218 aa).

Position 19 (Y19) interacts with tRNA. H24 acts as the Proton acceptor in catalysis. Positions 68, 70, and 116 each coordinate tRNA. The disordered stretch occupies residues W181 to P218. The span at P192–P204 shows a compositional bias: pro residues.

Belongs to the PTH family. In terms of assembly, monomer.

The protein localises to the cytoplasm. It catalyses the reaction an N-acyl-L-alpha-aminoacyl-tRNA + H2O = an N-acyl-L-amino acid + a tRNA + H(+). Functionally, hydrolyzes ribosome-free peptidyl-tRNAs (with 1 or more amino acids incorporated), which drop off the ribosome during protein synthesis, or as a result of ribosome stalling. Its function is as follows. Catalyzes the release of premature peptidyl moieties from peptidyl-tRNA molecules trapped in stalled 50S ribosomal subunits, and thus maintains levels of free tRNAs and 50S ribosomes. The protein is Peptidyl-tRNA hydrolase of Azoarcus sp. (strain BH72).